The following is a 220-amino-acid chain: Putative cobalt transport protein CbiM (220 aa).

The next 6 membrane-spanning stretches (helical) occupy residues G6–Y26, I45–G65, G74–L94, T107–F127, L153–V173, and I188–S208.

This sequence belongs to the CbiM family. Forms an energy-coupling factor (ECF) transporter complex composed of an ATP-binding protein (A component, CbiO), a transmembrane protein (T component, CbiQ) and 2 possible substrate-capture proteins (S components, CbiM and CbiN) of unknown stoichimetry.

The protein localises to the cell membrane. It functions in the pathway cofactor biosynthesis; adenosylcobalamin biosynthesis. Part of the energy-coupling factor (ECF) transporter complex CbiMNOQ involved in cobalt import. The sequence is that of Putative cobalt transport protein CbiM from Halobacterium salinarum (strain ATCC 29341 / DSM 671 / R1).